A 151-amino-acid polypeptide reads, in one-letter code: Cytochrome c-type biogenesis protein CcmE (151 aa).

Topologically, residues 1–8 (MNPLRRKR) are cytoplasmic. The helical; Signal-anchor for type II membrane protein transmembrane segment at 9–29 (LLIILAILVGVGVAVGLALSA) threads the bilayer. Over 30-151 (LQQNINLFYT…QSAPTPAKEG (122 aa)) the chain is Periplasmic. His124 and Tyr128 together coordinate heme.

It belongs to the CcmE/CycJ family.

It is found in the cell inner membrane. In terms of biological role, heme chaperone required for the biogenesis of c-type cytochromes. Transiently binds heme delivered by CcmC and transfers the heme to apo-cytochromes in a process facilitated by CcmF and CcmH. In Pseudomonas fluorescens biotype C, this protein is Cytochrome c-type biogenesis protein CcmE.